The chain runs to 101 residues: Gamma-secretase subunit PEN-2 (101 aa).

The Cytoplasmic portion of the chain corresponds to 1-17; the sequence is MNLERVSNEEKLNLCRK. The segment at residues 18–36 is an intramembrane region (helical); the sequence is YYLGGFAFLPFLWLVNIFW. The Cytoplasmic portion of the chain corresponds to 37–57; it reads FFREAFIVPAYTEQSQIKGYV. The chain crosses the membrane as a helical span at residues 58–78; the sequence is WRSAVGFFLWVIVLSTWITIF. The Lumenal portion of the chain corresponds to 79–101; it reads QIYRPRWGALGDYLSFTIPLGTP.

It belongs to the PEN-2 family. In terms of assembly, the functional gamma-secretase complex is composed of at least four polypeptides: a presenilin homodimer (PSEN1 or PSEN2), nicastrin (NCSTN), APH1 (APH1A or APH1B) and PSENEN.

The protein resides in the endoplasmic reticulum membrane. It localises to the golgi apparatus. The protein localises to the golgi stack membrane. It is found in the cell membrane. Its subcellular location is the membrane. Its function is as follows. Essential subunit of the gamma-secretase complex, an endoprotease complex that catalyzes the intramembrane cleavage of integral membrane proteins such as Notch receptors and APP (amyloid-beta precursor protein). The gamma-secretase complex plays a role in Notch and Wnt signaling cascades and regulation of downstream processes via its role in processing key regulatory proteins, and by regulating cytosolic CTNNB1 levels. PSENEN modulates both endoproteolysis of presenilin and gamma-secretase activity. In Bos taurus (Bovine), this protein is Gamma-secretase subunit PEN-2 (PSENEN).